A 472-amino-acid polypeptide reads, in one-letter code: MTEFGIRNMDQVAPVYNGHRGMLKRQLAFDNVQVPTSLYCGLFSAYEEEQAVPTGLDSYPHDSSSCELPLLTPCSKAVMSQALKDTFNGFAKERCRLGIPGNPWLWDENNVLQWLLWAAKEFSLENVNFQKFLMNGHELCSLGKERFLALAPDFVGDILWEHLEEMMKEYQEKAQEPYIDHSNRDSLNQWMNADSLNFTADPLQCGAQVHNYPKNGMYNDMCSVPTGQTLLNPKQEFQQYPSSCLKSRAVNYPPASQDFARSHMNVLLNSLNSGKLRDYDSGDSGTESFESTESLLHSWTSQSSLVDMQRVPSYDSFEEDGNQTLCLNKQPMSFKDYIQDRCEPAELGKPVIPASILAGFTGSGPIQLWQFLLELLTDKSCQSFISWTGDGWEFKLADPDEVARRWGKRKNKPKMNYEKLSRGLRYYYDKNIIHKTSGKRYVYRFVCDLHNLLGYTPDELHAMLGVQPDTDE.

The region spanning 85–170 (DTFNGFAKER…EHLEEMMKEY (86 aa)) is the PNT domain. The ETS DNA-binding region spans 366–446 (IQLWQFLLEL…SGKRYVYRFV (81 aa)).

Belongs to the ETS family.

It localises to the nucleus. Its function is as follows. Probable transcription factor. The chain is Protein c-ets-2-B (ets2-b) from Xenopus laevis (African clawed frog).